Here is a 168-residue protein sequence, read N- to C-terminus: Ribosome maturation factor RimP (168 aa).

This sequence belongs to the RimP family.

The protein resides in the cytoplasm. Functionally, required for maturation of 30S ribosomal subunits. In Rickettsia bellii (strain OSU 85-389), this protein is Ribosome maturation factor RimP.